A 179-amino-acid polypeptide reads, in one-letter code: Inorganic pyrophosphatase (179 aa).

Residues lysine 30, arginine 44, and tyrosine 56 each contribute to the substrate site. Mg(2+) is bound by residues aspartate 66, aspartate 71, and aspartate 103. Residue tyrosine 143 coordinates substrate.

This sequence belongs to the PPase family. As to quaternary structure, homohexamer. The cofactor is Mg(2+).

The protein localises to the cytoplasm. The enzyme catalyses diphosphate + H2O = 2 phosphate + H(+). Functionally, catalyzes the hydrolysis of inorganic pyrophosphate (PPi) forming two phosphate ions. The sequence is that of Inorganic pyrophosphatase from Wigglesworthia glossinidia brevipalpis.